The following is a 324-amino-acid chain: Concanavalin B (324 aa).

Residues 1–25 (MGCERKALILMVVIWIMSFWTLSLA) form the signal peptide. The GH18 domain occupies 30–311 (TEIAVYWGQR…TNIIRYLNAT (282 aa)). The N-linked (GlcNAc...) asparagine glycan is linked to N309.

It belongs to the glycosyl hydrolase 18 family.

May act as a carbohydrate-binding protein. The chain is Concanavalin B from Canavalia ensiformis (Jack bean).